Here is a 320-residue protein sequence, read N- to C-terminus: Protein MRG1 (320 aa).

The tract at residues 1–28 is disordered; it reads MGSSSKEETASDGDTASGGASPSNDGRL. Polar residues predominate over residues 12 to 24; the sequence is DGDTASGGASPSN. Positions 30–80 constitute a Tudor-knot domain; sequence SEGERVLAYHGPRVYGAKVQKVELRKKEWKYFVHYLGWNKNWDEWVSADRL. Basic and acidic residues predominate over residues 93–104; it reads ALDKKQGVEKGT. The tract at residues 93–147 is disordered; sequence ALDKKQGVEKGTKSGRSAQTKTRSSADTKADKDDTKTNAAKGKKRKHESGNEKDN. The segment covering 106 to 115 has biased composition (polar residues); the sequence is SGRSAQTKTR. Basic and acidic residues predominate over residues 116–128; that stretch reads SSADTKADKDDTK. An MRG domain is found at 150 to 318; the sequence is AEKLMKIQIP…KVSDGKGKGK (169 aa).

In terms of assembly, interacts with HAM1 and HAM2. Interacts (via MRG domain) with CO. Component of the NuA4 histone acetyltransferase complex. Ubiquitous. Mainly expressed in the vasculature of cotyledons and leaves, and in roots and inflorescences.

Its subcellular location is the nucleus. In terms of biological role, chromatin remodeling factor. Acts as a 'reader' protein by binding to H3K36me3 and H3K36me3 to control histone H4 acetylation. Increases the transcriptional levels of the flowering time genes FLC and FT. Binds the chromatin at the FT promoter upon interaction with CO. The protein is Protein MRG1 of Arabidopsis thaliana (Mouse-ear cress).